Here is a 147-residue protein sequence, read N- to C-terminus: Protein-export protein SecB (147 aa).

Belongs to the SecB family. Homotetramer, a dimer of dimers. One homotetramer interacts with 1 SecA dimer.

The protein resides in the cytoplasm. One of the proteins required for the normal export of preproteins out of the cell cytoplasm. It is a molecular chaperone that binds to a subset of precursor proteins, maintaining them in a translocation-competent state. It also specifically binds to its receptor SecA. This is Protein-export protein SecB from Neisseria meningitidis serogroup C (strain 053442).